Here is a 277-residue protein sequence, read N- to C-terminus: tRNA (guanine-N(7)-)-methyltransferase (277 aa).

Residues 1–37 (MAGTETGDAAGTEAPQPQKRYYRQRAHSNPMADHTLR) are disordered. Residue serine 28 is modified to Phosphoserine. S-adenosyl-L-methionine is bound by residues glycine 85, glutamate 108, arginine 110, asparagine 141, alanine 142, and leucine 161. Aspartate 164 is a catalytic residue. Positions 165–173 (PHFKRTKHK) are alphaC helix. S-adenosyl-L-methionine contacts are provided by threonine 239 and glutamate 241. The alpha6 helix stretch occupies residues 239–247 (TEEGKKVLR).

It belongs to the class I-like SAM-binding methyltransferase superfamily. TrmB family. Catalytic component of the METTL1-WDR4 complex, composed of METTL1 and WDR4. Post-translationally, phosphorylation at Ser-28 by PKB/AKT1 inactivates its methyltransferase activity via a steric interference mechanism in the active site that locally disrupts the catalytic center. Phosphorylation at Ser-28 does not affect the interaction with WDR4.

Its subcellular location is the nucleus. It catalyses the reaction guanosine(46) in tRNA + S-adenosyl-L-methionine = N(7)-methylguanosine(46) in tRNA + S-adenosyl-L-homocysteine. The enzyme catalyses a guanosine in mRNA + S-adenosyl-L-methionine = an N(7)-methylguanosine in mRNA + S-adenosyl-L-homocysteine. It carries out the reaction a guanosine in miRNA + S-adenosyl-L-methionine = an N(7)-methylguanosine in miRNA + S-adenosyl-L-homocysteine. It participates in tRNA modification; N(7)-methylguanine-tRNA biosynthesis. In terms of biological role, catalytic component of METTL1-WDR4 methyltransferase complex that mediates the formation of N(7)-methylguanine in a subset of RNA species, such as tRNAs, mRNAs and microRNAs (miRNAs). Catalyzes the formation of N(7)-methylguanine at position 46 (m7G46) in a large subset of tRNAs that contain the 5'-RAGGU-3' motif within the variable loop. M7G46 interacts with C13-G22 in the D-loop to stabilize tRNA tertiary structure and protect tRNAs from decay. Also acts as a methyltransferase for a subset of internal N(7)-methylguanine in mRNAs. Internal N(7)-methylguanine methylation of mRNAs in response to stress promotes their relocalization to stress granules, thereby suppressing their translation. Also methylates a specific subset of miRNAs, such as let-7. N(7)-methylguanine methylation of let-7 miRNA promotes let-7 miRNA processing by disrupting an inhibitory secondary structure within the primary miRNA transcript (pri-miRNA). Acts as a regulator of embryonic stem cell self-renewal and differentiation. The chain is tRNA (guanine-N(7)-)-methyltransferase from Bos taurus (Bovine).